The following is a 297-amino-acid chain: Ribosome production factor 2 homolog (297 aa).

Residues 28 to 232 (KKALFCRGAK…VMRKKLADDA (205 aa)) form the Brix domain.

The protein belongs to the RPF2 family.

It localises to the nucleus. It is found in the nucleolus. This is Ribosome production factor 2 homolog from Caenorhabditis elegans.